The following is a 426-amino-acid chain: Formate-dependent phosphoribosylglycinamide formyltransferase (426 aa).

N(1)-(5-phospho-beta-D-ribosyl)glycinamide contacts are provided by residues 26–27 (EL) and Glu86. ATP-binding positions include Arg118, Lys158, 197 to 200 (EEFI), and Glu205. One can recognise an ATP-grasp domain in the interval 123–324 (EAIASTGART…EFALHAKAVL (202 aa)). Mg(2+) contacts are provided by Glu279 and Glu293. N(1)-(5-phospho-beta-D-ribosyl)glycinamide is bound by residues Asp300, Lys374, and 381–382 (RR).

It belongs to the PurK/PurT family. Homodimer.

It carries out the reaction N(1)-(5-phospho-beta-D-ribosyl)glycinamide + formate + ATP = N(2)-formyl-N(1)-(5-phospho-beta-D-ribosyl)glycinamide + ADP + phosphate + H(+). It functions in the pathway purine metabolism; IMP biosynthesis via de novo pathway; N(2)-formyl-N(1)-(5-phospho-D-ribosyl)glycinamide from N(1)-(5-phospho-D-ribosyl)glycinamide (formate route): step 1/1. Functionally, involved in the de novo purine biosynthesis. Catalyzes the transfer of formate to 5-phospho-ribosyl-glycinamide (GAR), producing 5-phospho-ribosyl-N-formylglycinamide (FGAR). Formate is provided by PurU via hydrolysis of 10-formyl-tetrahydrofolate. The chain is Formate-dependent phosphoribosylglycinamide formyltransferase from Methanocella arvoryzae (strain DSM 22066 / NBRC 105507 / MRE50).